The sequence spans 115 residues: Large ribosomal subunit protein bL20 (115 aa).

It belongs to the bacterial ribosomal protein bL20 family.

Its function is as follows. Binds directly to 23S ribosomal RNA and is necessary for the in vitro assembly process of the 50S ribosomal subunit. It is not involved in the protein synthesizing functions of that subunit. The protein is Large ribosomal subunit protein bL20 of Prochlorococcus marinus (strain MIT 9301).